A 397-amino-acid chain; its full sequence is ATP-dependent RNA helicase eIF4A (397 aa).

The Q motif motif lies at 24 to 52 (DSFDEMNLKPELLRGIYAYGFERPSAIQQ). One can recognise a Helicase ATP-binding domain in the interval 55–225 (IMPVIKGHDV…TKFMREPVRI (171 aa)). 68 to 75 (AQSGTGKT) contacts ATP. Positions 173–176 (DEAD) match the DEAD box motif. The 162-residue stretch at 236 to 397 (GIKQFYIAVE…EMPMNVADLI (162 aa)) folds into the Helicase C-terminal domain.

Belongs to the DEAD box helicase family. eIF4A subfamily. As to quaternary structure, component of the eIF4F complex, which composition varies with external and internal environmental conditions. It is composed of at least eIF4A, eIF4E and eIF4G.

The protein localises to the cytoplasm. It carries out the reaction ATP + H2O = ADP + phosphate + H(+). Its function is as follows. ATP-dependent RNA helicase which is a subunit of the eIF4F complex involved in cap recognition and is required for mRNA binding to ribosome. In the current model of translation initiation, eIF4A unwinds RNA secondary structures in the 5'-UTR of mRNAs which is necessary to allow efficient binding of the small ribosomal subunit, and subsequent scanning for the initiator codon. The polypeptide is ATP-dependent RNA helicase eIF4A (tif-1) (Neurospora crassa (strain ATCC 24698 / 74-OR23-1A / CBS 708.71 / DSM 1257 / FGSC 987)).